The chain runs to 64 residues: Translational regulator CsrA 1 (64 aa).

It belongs to the CsrA/RsmA family. As to quaternary structure, homodimer; the beta-strands of each monomer intercalate to form a hydrophobic core, while the alpha-helices form wings that extend away from the core.

The protein localises to the cytoplasm. Its function is as follows. A key translational regulator that binds mRNA to regulate translation initiation and/or mRNA stability. Mediates global changes in gene expression, shifting from rapid growth to stress survival by linking envelope stress, the stringent response and the catabolite repression systems. Usually binds in the 5'-UTR; binding at or near the Shine-Dalgarno sequence prevents ribosome-binding, repressing translation, binding elsewhere in the 5'-UTR can activate translation and/or stabilize the mRNA. Its function is antagonized by small RNA(s). The protein is Translational regulator CsrA 1 of Pseudomonas syringae pv. tomato (strain ATCC BAA-871 / DC3000).